Consider the following 622-residue polypeptide: Matrilin-4 (622 aa).

The first 18 residues, 1–18 (MRGLLCWPVLLLLLQPWE), serve as a signal peptide directing secretion. The 180-residue stretch at 34 to 213 (DLVFVIDSSR…EFGLQFQSRL (180 aa)) folds into the VWFA 1 domain. Asn-69 is a glycosylation site (N-linked (GlcNAc...) asparagine). Residues 215 to 255 (GKDQCAEGGHGCQHQCVNAWAMFHCTCNPGYKLAADNKSCL) enclose the EGF-like 1; incomplete domain. Cystine bridges form between Cys-219/Cys-230, Cys-226/Cys-239, Cys-241/Cys-254, Cys-260/Cys-271, Cys-267/Cys-280, Cys-282/Cys-295, Cys-301/Cys-312, Cys-308/Cys-321, Cys-323/Cys-336, Cys-342/Cys-353, Cys-349/Cys-362, and Cys-364/Cys-377. N-linked (GlcNAc...) asparagine glycosylation occurs at Asn-251. EGF-like domains follow at residues 256–292 (AIDL…QQDQ), 297–337 (AIDY…RSCQ), and 342–377 (CNGV…GKSC). N-linked (GlcNAc...) asparagine glycosylation occurs at Asn-305. Positions 386–561 (DLVLLVDGSK…GTMTHLLENL (176 aa)) constitute a VWFA 2 domain. Positions 591–622 (GRTLGALESLTLNLAQLTARLEDLENQLANQK) form a coiled coil.

Interacts with COMP. In terms of tissue distribution, embryonic kidney, lung and placenta.

The protein resides in the secreted. Functionally, major component of the extracellular matrix of cartilage. This is Matrilin-4 (MATN4) from Homo sapiens (Human).